We begin with the raw amino-acid sequence, 147 residues long: Allograft inflammatory factor 1 (147 aa).

S2 carries the N-acetylserine modification. The residue at position 11 (K11) is an N6-acetyllysine. A Phosphoserine modification is found at S39. EF-hand domains are found at residues 45-80 (SKLEGFKEKYMEFDLNGNGDIDIMSLKRMLEKLGVP) and 81-115 (KTHLELKKLIGEVSSGSGETFSYPDFLRMMLGKRS). Residues D58, N60, N62, D64, T100, and D105 each contribute to the Ca(2+) site. The disordered stretch occupies residues 128–147 (AREKEKPTGPPAKKAISELP).

As to quaternary structure, homodimer (Potential). Monomer. Interacts with LCP1. Phosphorylated on serine residues.

Its subcellular location is the cytoplasm. The protein resides in the cytoskeleton. It is found in the cell projection. The protein localises to the ruffle membrane. It localises to the phagocytic cup. Actin-binding protein that enhances membrane ruffling and RAC activation. Enhances the actin-bundling activity of LCP1. Binds calcium. Plays a role in RAC signaling and in phagocytosis. May play a role in macrophage activation and function. Promotes the proliferation of vascular smooth muscle cells and of T-lymphocytes. Enhances lymphocyte migration. Plays a role in vascular inflammation. The chain is Allograft inflammatory factor 1 (AIF1) from Macaca mulatta (Rhesus macaque).